Reading from the N-terminus, the 241-residue chain is Uridylate kinase (241 aa).

13 to 16 lines the ATP pocket; that stretch reads KVSG. G55 is a binding site for UMP. Positions 56 and 60 each coordinate ATP. Residues D75 and 136-143 each bind UMP; that span reads TGNPFFTT. Residues T163, Q164, Y169, and D172 each contribute to the ATP site.

It belongs to the UMP kinase family. As to quaternary structure, homohexamer.

It is found in the cytoplasm. The enzyme catalyses UMP + ATP = UDP + ADP. The protein operates within pyrimidine metabolism; CTP biosynthesis via de novo pathway; UDP from UMP (UMPK route): step 1/1. Inhibited by UTP. Functionally, catalyzes the reversible phosphorylation of UMP to UDP. This chain is Uridylate kinase, found in Parvibaculum lavamentivorans (strain DS-1 / DSM 13023 / NCIMB 13966).